Consider the following 375-residue polypeptide: Nicotinate-nucleotide--dimethylbenzimidazole phosphoribosyltransferase (375 aa).

Residue E323 is the Proton acceptor of the active site. Positions 344 to 375 (LPEKPEELEAGEGPEAAEESSPEPENPEALAE) are disordered. Acidic residues predominate over residues 351–375 (LEAGEGPEAAEESSPEPENPEALAE).

It belongs to the CobT family.

The enzyme catalyses 5,6-dimethylbenzimidazole + nicotinate beta-D-ribonucleotide = alpha-ribazole 5'-phosphate + nicotinate + H(+). The protein operates within nucleoside biosynthesis; alpha-ribazole biosynthesis; alpha-ribazole from 5,6-dimethylbenzimidazole: step 1/2. Its function is as follows. Catalyzes the synthesis of alpha-ribazole-5'-phosphate from nicotinate mononucleotide (NAMN) and 5,6-dimethylbenzimidazole (DMB). This chain is Nicotinate-nucleotide--dimethylbenzimidazole phosphoribosyltransferase, found in Streptomyces avermitilis (strain ATCC 31267 / DSM 46492 / JCM 5070 / NBRC 14893 / NCIMB 12804 / NRRL 8165 / MA-4680).